Consider the following 236-residue polypeptide: 2-C-methyl-D-erythritol 4-phosphate cytidylyltransferase (236 aa).

The protein belongs to the IspD/TarI cytidylyltransferase family. IspD subfamily. Homodimer.

It carries out the reaction 2-C-methyl-D-erythritol 4-phosphate + CTP + H(+) = 4-CDP-2-C-methyl-D-erythritol + diphosphate. The protein operates within isoprenoid biosynthesis; isopentenyl diphosphate biosynthesis via DXP pathway; isopentenyl diphosphate from 1-deoxy-D-xylulose 5-phosphate: step 2/6. Catalyzes the formation of 4-diphosphocytidyl-2-C-methyl-D-erythritol from CTP and 2-C-methyl-D-erythritol 4-phosphate (MEP). This chain is 2-C-methyl-D-erythritol 4-phosphate cytidylyltransferase, found in Cronobacter sakazakii (strain ATCC BAA-894) (Enterobacter sakazakii).